The sequence spans 246 residues: Orotidine 5'-phosphate decarboxylase (246 aa).

Residues aspartate 22, lysine 44, 71–80, threonine 130, arginine 191, glutamine 201, glycine 221, and arginine 222 contribute to the substrate site; that span reads DLKYHDIPHT. The active-site Proton donor is the lysine 73.

Belongs to the OMP decarboxylase family. Type 1 subfamily. As to quaternary structure, homodimer.

The enzyme catalyses orotidine 5'-phosphate + H(+) = UMP + CO2. It functions in the pathway pyrimidine metabolism; UMP biosynthesis via de novo pathway; UMP from orotate: step 2/2. Functionally, catalyzes the decarboxylation of orotidine 5'-monophosphate (OMP) to uridine 5'-monophosphate (UMP). This Neisseria meningitidis serogroup A / serotype 4A (strain DSM 15465 / Z2491) protein is Orotidine 5'-phosphate decarboxylase.